A 1410-amino-acid polypeptide reads, in one-letter code: DNA-directed RNA polymerase subunit beta' (1410 aa).

The Zn(2+) site is built by C70, C72, C85, and C88. D460, D462, and D464 together coordinate Mg(2+). Zn(2+) contacts are provided by C814, C888, C895, and C898.

It belongs to the RNA polymerase beta' chain family. As to quaternary structure, the RNAP catalytic core consists of 2 alpha, 1 beta, 1 beta' and 1 omega subunit. When a sigma factor is associated with the core the holoenzyme is formed, which can initiate transcription. Mg(2+) is required as a cofactor. It depends on Zn(2+) as a cofactor.

The catalysed reaction is RNA(n) + a ribonucleoside 5'-triphosphate = RNA(n+1) + diphosphate. Functionally, DNA-dependent RNA polymerase catalyzes the transcription of DNA into RNA using the four ribonucleoside triphosphates as substrates. The polypeptide is DNA-directed RNA polymerase subunit beta' (Buchnera aphidicola subsp. Cinara cedri (strain Cc)).